The chain runs to 206 residues: RNA pyrophosphohydrolase (206 aa).

One can recognise a Nudix hydrolase domain in the interval 6–149 (GYRPNVGIVL…KRGVYARALR (144 aa)). Residues 38–59 (GGMNTDETPVEAMYRELQEETG) carry the Nudix box motif. The interval 175–206 (MPGHTAGHDRPRKRPRTRGYWPKKATGDGPAS) is disordered.

Belongs to the Nudix hydrolase family. RppH subfamily. The cofactor is a divalent metal cation.

Accelerates the degradation of transcripts by removing pyrophosphate from the 5'-end of triphosphorylated RNA, leading to a more labile monophosphorylated state that can stimulate subsequent ribonuclease cleavage. In Stenotrophomonas maltophilia (strain K279a), this protein is RNA pyrophosphohydrolase.